The primary structure comprises 82 residues: Sec-independent protein translocase protein TatA (82 aa).

Residues 1-21 (MGSFSIWHWLIVLLVVVMIFG) traverse the membrane as a helical segment. A disordered region spans residues 39–82 (FKDGMKDGSTTDAPAASSAPAAQVTGQPANSDKSTIDVEARQKS). Residues 51-60 (APAASSAPAA) are compositionally biased toward low complexity. Residues 62-71 (VTGQPANSDK) are compositionally biased toward polar residues. Residues 72-82 (STIDVEARQKS) are compositionally biased toward basic and acidic residues.

It belongs to the TatA/E family. As to quaternary structure, the Tat system comprises two distinct complexes: a TatABC complex, containing multiple copies of TatA, TatB and TatC subunits, and a separate TatA complex, containing only TatA subunits. Substrates initially bind to the TatABC complex, which probably triggers association of the separate TatA complex to form the active translocon.

Its subcellular location is the cell inner membrane. In terms of biological role, part of the twin-arginine translocation (Tat) system that transports large folded proteins containing a characteristic twin-arginine motif in their signal peptide across membranes. TatA could form the protein-conducting channel of the Tat system. The sequence is that of Sec-independent protein translocase protein TatA from Variovorax paradoxus (strain S110).